The primary structure comprises 95 residues: Pyrimidine/purine nucleoside phosphorylase (95 aa).

Belongs to the nucleoside phosphorylase PpnP family.

It carries out the reaction a purine D-ribonucleoside + phosphate = a purine nucleobase + alpha-D-ribose 1-phosphate. The enzyme catalyses adenosine + phosphate = alpha-D-ribose 1-phosphate + adenine. The catalysed reaction is cytidine + phosphate = cytosine + alpha-D-ribose 1-phosphate. It catalyses the reaction guanosine + phosphate = alpha-D-ribose 1-phosphate + guanine. It carries out the reaction inosine + phosphate = alpha-D-ribose 1-phosphate + hypoxanthine. The enzyme catalyses thymidine + phosphate = 2-deoxy-alpha-D-ribose 1-phosphate + thymine. The catalysed reaction is uridine + phosphate = alpha-D-ribose 1-phosphate + uracil. It catalyses the reaction xanthosine + phosphate = alpha-D-ribose 1-phosphate + xanthine. In terms of biological role, catalyzes the phosphorolysis of diverse nucleosides, yielding D-ribose 1-phosphate and the respective free bases. Can use uridine, adenosine, guanosine, cytidine, thymidine, inosine and xanthosine as substrates. Also catalyzes the reverse reactions. This chain is Pyrimidine/purine nucleoside phosphorylase, found in Yersinia pestis bv. Antiqua (strain Antiqua).